The sequence spans 135 residues: Salivary protein 15 Iper-1 (135 aa).

The N-terminal stretch at 1–22 is a signal peptide; it reads MESFVAMKVVCILFLFVVAAEA. N-linked (GlcNAc...) asparagine glycans are attached at residues N93 and N104. Residues 116 to 135 form a CD4-binding region; sequence GPNKQTCADKSKCVGHIPGC.

Belongs to the salp15 family. As to quaternary structure, interacts with host CD4. Interacts with host DC-SIGN (CD209). (Microbial infection) Interacts with Borrelia outer surface protein C (OspC). As to expression, expressed in salivary glands from feeding female ticks. Highly expressed 4 days after start of feeding.

It is found in the secreted. In terms of biological role, salivary tick protein that downregulates host immune system by binding to both dendritic cells, and CD4(+) T cells. Specifically binds to the CD4 coreceptor on T cells. This interaction prevents the activation of the Src kinase, Lck, and its downstream substrate Zap-70, and results in deficient activation of PLCgamma1, the repression of calcium fluxes triggered by T-cell antigen receptor (TCR) ligation, and a subsequent reduction in interleukin-2 production. This salivary protein also binds to DC-SIGN (CD209) on dendritic cells (DC) and activates the Raf-1 kinase/MEK signaling pathway that results in down-regulating expression of pro-inflammatory cytokines. Furthermore, it inhibits T cell proliferation induced by DCs. It also inhibits in vitro keratinocyte inflammation induced by Borrelia burgdorferi or by the major outer surface protein (OspC) of Borrelia. In addition, it downregulates chemokines and monocyte chemoattractant protein 1, as well as several antimicrobial peptides such as defensins, cathelicidin, psoriasin, and RNase 7. Apart from its immunomodulatory activities, it is also associated with protection of Borrelia spirochetes from antibody-mediated killing through its binding to OspC. In vivo, tests on different immune disease animal models show promising therapeutic results, e.g., in inhibiting HIV infection, experimental autoimmune encephalomyelitis, transplantation rejection, and asthma. (Microbial infection) Protects Borrelia garinii from anti-Borrelia antibody-mediated cytotoxicity in vitro. May facilitate B.garinii transmission in mouse model. Functionally, (Microbial infection) Protects Borrelia burgdorferi from anti-Borrelia antibody-mediated cytotoxicity in vitro. Its function is as follows. (Microbial infection) Protects Borrelia afzelii from anti-Borrelia antibody-mediated cytotoxicity in vitro. This is Salivary protein 15 Iper-1 from Ixodes persulcatus (Taiga tick).